Consider the following 339-residue polypeptide: Longiborneol synthase CLM1 (339 aa).

Residues 1-17 are compositionally biased toward polar residues; it reads MLATPTLSNFDKPSLPS. Positions 1 to 21 are disordered; the sequence is MLATPTLSNFDKPSLPSSEGG. Residues D112, N241, S245, and E249 each contribute to the Mg(2+) site. The short motif at 241-249 is the NDXXSXXXE magnesium-binding motif element; the sequence is NDVLSFYKE.

Belongs to the trichodiene synthase family. Mg(2+) serves as cofactor. It depends on Mn(2+) as a cofactor.

The catalysed reaction is (2E,6E)-farnesyl diphosphate + H2O = (-)-longiborneol + diphosphate. Its pathway is mycotoxin biosynthesis. Terpene cyclase involved in the biosynthesis of culmorin, a tricyclic sesquiterpene diol reported to have antifungal activity and some phytotoxicity to wheat coleoptile tissue, contributing to Fusarium head blight disease. The terpene cyclase CLM1 is responsible for the cyclization of farnesyl diphosphate into the intermediate longiborneol. Longiborneol is then hydroxylated in a regio- and endo-stereoselective manner at position C-11 by the cytochrome P450 monooxygenase CLM2 to produce culmorin. Additional non-specific oxygenases are also able to hydroxylate longiborneol at other sites than C-11 leading to 3-hydroxylongiborneol, 5-hydroxylongiborneol, 12-hydroxylongiborneol and 15-hydroxylongiborneol. Moreover, another oxygenase capable of installing a C-11 exo-hydroxy group in longiborneol can also yield 11-epi-acetylculmorin. The production of these longiborneol derivatives is dwarfed by the high abundance of culmorin, suggesting that CLM2 displays superior enzymatic activity to the unidentified, possibly promiscuous, additional oxygenases. The protein is Longiborneol synthase CLM1 of Gibberella zeae (strain ATCC MYA-4620 / CBS 123657 / FGSC 9075 / NRRL 31084 / PH-1) (Wheat head blight fungus).